Consider the following 706-residue polypeptide: MAKVRVYEYAKAIDVSSKDIIAALKDMNVEVNNHMATLEDDTVKKLDAIYKKAKAKETANEKPAEQKKQSSNKINDRKKNDVQNNQFNKNKKNNNQNKNKNKRGGNNKSQHQQARPVKPKKELPEKIEFTNSMTVGQLAEELGKETAEIIKKLMMLGVMATINQELDKDTVELIASEYGVPVEEVIILEETELEKYEVEDKEEDMQVRPPVVTIMGHVDHGKTTLLDSIRKTKVVEGEAGGITQHIGAYQIEENGKKITFLDTPGHAAFTTMRARGAEVTDTTILVVAADDGVMPQTVEAINHAKAAEVPIIVAVNKIDKPTANPDRVMQELTEHGLVPEAWGGETIFVPLSAKTGEGIDELIEMILLVSEVGELKANPNRAAKGTVIEAELDKGRGSVATLLVQTGTLHVGDPIVVGNTFGRVRAMVNDIGRRVKTAGPSTPVEITGLNDVPNAGDQFLVFKDEKTARQVGEARASKQLDEQRSDKAKLSLDDLFEQIKQGEVKDINLIVKADVQGSAEALTAALQKIEVEGVKVKIIHTGVGAITESDIILASASNAIVIGFNVRPDGNAKSTAETENVDIRLHRIIYKVIDEIEAAMKGMLDPEYEEKVIGQVEVRQTFKVSKIGTIAGGYVTEGTITRDSGIRLIRDGVVIFEGEVDVLKRFKDDVKEVSQGYECGITIKKYNDIREGDVMESFVMQEIERK.

The segment covering 55–81 (AKETANEKPAEQKKQSSNKINDRKKND) has biased composition (basic and acidic residues). Residues 55 to 127 (AKETANEKPA…KPKKELPEKI (73 aa)) form a disordered region. The span at 82 to 98 (VQNNQFNKNKKNNNQNK) shows a compositional bias: low complexity. The region spanning 207–376 (VRPPVVTIMG…LLVSEVGELK (170 aa)) is the tr-type G domain. The G1 stretch occupies residues 216 to 223 (GHVDHGKT). 216-223 (GHVDHGKT) contacts GTP. The interval 241–245 (GITQH) is G2. The G3 stretch occupies residues 262–265 (DTPG). Residues 262-266 (DTPGH) and 316-319 (NKID) each bind GTP. The tract at residues 316–319 (NKID) is G4. The interval 352-354 (SAK) is G5.

It belongs to the TRAFAC class translation factor GTPase superfamily. Classic translation factor GTPase family. IF-2 subfamily.

It is found in the cytoplasm. In terms of biological role, one of the essential components for the initiation of protein synthesis. Protects formylmethionyl-tRNA from spontaneous hydrolysis and promotes its binding to the 30S ribosomal subunits. Also involved in the hydrolysis of GTP during the formation of the 70S ribosomal complex. The polypeptide is Translation initiation factor IF-2 (Bacillus pumilus (strain SAFR-032)).